The chain runs to 214 residues: 3-isopropylmalate dehydratase small subunit (214 aa).

This sequence belongs to the LeuD family. LeuD type 1 subfamily. In terms of assembly, heterodimer of LeuC and LeuD.

The catalysed reaction is (2R,3S)-3-isopropylmalate = (2S)-2-isopropylmalate. Its pathway is amino-acid biosynthesis; L-leucine biosynthesis; L-leucine from 3-methyl-2-oxobutanoate: step 2/4. Catalyzes the isomerization between 2-isopropylmalate and 3-isopropylmalate, via the formation of 2-isopropylmaleate. This is 3-isopropylmalate dehydratase small subunit from Pseudomonas putida (strain W619).